We begin with the raw amino-acid sequence, 375 residues long: Growth/differentiation factor 8 (375 aa).

Residues Met-1–Ala-18 form the signal peptide. The propeptide occupies Gly-19–Arg-266. 2 N-linked (GlcNAc...) asparagine glycosylation sites follow: Asn-48 and Asn-71. Intrachain disulfides connect Cys-272–Cys-282, Cys-281–Cys-340, Cys-309–Cys-372, and Cys-313–Cys-374.

This sequence belongs to the TGF-beta family. In terms of assembly, homodimer; disulfide-linked. Interacts with WFIKKN2, leading to inhibit its activity. Interacts with FSTL3. Synthesized as large precursor molecule that undergoes proteolytic cleavage to generate an N-terminal propeptide and a disulfide linked C-terminal dimer, which is the biologically active molecule. The circulating form consists of a latent complex of the C-terminal dimer and other proteins, including its propeptide, which maintain the C-terminal dimer in a latent, inactive state. Ligand activation requires additional cleavage of the prodomain by a tolloid-like metalloproteinase.

The protein resides in the secreted. Functionally, acts specifically as a negative regulator of skeletal muscle growth. This Capra ibex (Ibex) protein is Growth/differentiation factor 8 (MSTN).